The primary structure comprises 411 residues: 6-hydroxytryprostatin B O-methyltransferase (411 aa).

Asp-270 is an S-adenosyl-L-methionine binding site. Residue His-313 is the Proton acceptor of the active site.

It belongs to the class I-like SAM-binding methyltransferase superfamily. Cation-independent O-methyltransferase family. Homodimer.

It catalyses the reaction 6-hydroxytryprostatin B + S-adenosyl-L-methionine = tryprostatin A + S-adenosyl-L-homocysteine + H(+). Its pathway is alkaloid biosynthesis. Its function is as follows. 6-hydroxytryprostatin B O-methyltransferase; part of the gene cluster that mediates the biosynthesis of fumitremorgins, indole alkaloids that carry not only intriguing chemical structures, but also interesting biological and pharmacological activities. The biosynthesis of fumitremorgin-type alkaloids begins by condensation of the two amino acids L-tryptophan and L-proline to brevianamide F, catalyzed by the non-ribosomal peptide synthetase ftmPS/ftmA. Brevianamide F is then prenylated by the prenyltransferase ftmPT1/ftmB in the presence of dimethylallyl diphosphate, resulting in the formation of tryprostatin B. The three cytochrome P450 monooxygenases, ftmP450-1/ftmC, ftmP450-2/ftmE and ftmP450-3/FtmG, are responsible for the conversion of tryprostatin B to 6-hydroxytryprostatin B, tryprostatin A to fumitremorgin C and fumitremorgin C to 12,13-dihydroxyfumitremorgin C, respectively. The putative methyltransferase ftmMT/ftmD is expected for the conversion of 6-hydroxytryprostatin B to tryprostatin A. FtmPT2/FtmH catalyzes the prenylation of 12,13-dihydroxyfumitre-morgin C in the presence of dimethylallyl diphosphate, resulting in the formation of fumitremorgin B. Fumitremorgin B is further converted to verruculogen by ftmOx1/ftmF via the insertion of an endoperoxide bond between the two prenyl moieties. Finally, verruculogen is further converted to fumitremorgin A by the verruculogen prenyltransferase ftmPT3. This chain is 6-hydroxytryprostatin B O-methyltransferase, found in Neosartorya fischeri (strain ATCC 1020 / DSM 3700 / CBS 544.65 / FGSC A1164 / JCM 1740 / NRRL 181 / WB 181) (Aspergillus fischerianus).